A 108-amino-acid polypeptide reads, in one-letter code: uncharacterized protein (108 aa).

The first 24 residues, 1 to 24 (MNLWEFRFGKSFLFIPNFIMKVLA), serve as a signal peptide directing secretion.

It to M.jannaschii MJ0803.

This is an uncharacterized protein from Methanocaldococcus jannaschii (strain ATCC 43067 / DSM 2661 / JAL-1 / JCM 10045 / NBRC 100440) (Methanococcus jannaschii).